Here is a 172-residue protein sequence, read N- to C-terminus: uncharacterized protein (172 aa).

Residues 3–171 form the PfpI endopeptidase domain; that stretch reads KKVAIILADE…FNREIVKKLE (169 aa).

It belongs to the peptidase C56 family.

This is an uncharacterized protein from Staphylococcus epidermidis (strain ATCC 35984 / DSM 28319 / BCRC 17069 / CCUG 31568 / BM 3577 / RP62A).